A 475-amino-acid chain; its full sequence is MSPQTETKASVGFKAGVKDYKLTYYTPDYETKDTDILAAFRVTPQPGVPPEEAGAAVAAESSTGTWTTVWTDGLTSLDRYKGRCYHIEPVAGEENQYIAYVAYPLDLFEEGSVTNMFTSIVGNVFGFKALRALRLEDLRIPTAYVKTFQGPPHGIQVERDKLNKYGRPLLGCTIKPKLGLSAKNYGRAVYECLRGGLDFTKDDENVNSQPFMRWRDRFLFCTEALYKAQTETGEIKGHYLNATAGTCEEMIKRAVFARELGVPIVMHDYLTGGFTANTSLAHYCRDNGLLLHIHRAMHAVIDRQKNHGIHFRVLAKALRMSGGDHIHSGTVVGKLEGERDITLGFVDLLRDDFIEKDRSRGIYFTQDWVSLPGVLPVASGGIHVWHMPALTEIFGDDSVLQFGGGTLGHPWGNAPGAVANRVALEACVQARNEGRDLAREGNEIIRKACKWSRELAAACEVWKEIKFEFEAMDTL.

Residues 1–2 constitute a propeptide that is removed on maturation; sequence MS. Position 3 is an N-acetylproline (Pro3). Lys14 is modified (N6,N6,N6-trimethyllysine). Residues Asn123 and Thr173 each contribute to the substrate site. The active-site Proton acceptor is Lys175. Lys177 contributes to the substrate binding site. Mg(2+) contacts are provided by Lys201, Asp203, and Glu204. Lys201 is modified (N6-carboxylysine). His294 serves as the catalytic Proton acceptor. Residues Arg295, His327, and Ser379 each coordinate substrate.

Belongs to the RuBisCO large chain family. Type I subfamily. In terms of assembly, heterohexadecamer of 8 large chains and 8 small chains; disulfide-linked. The disulfide link is formed within the large subunit homodimers. Mg(2+) is required as a cofactor. In terms of processing, the disulfide bond which can form in the large chain dimeric partners within the hexadecamer appears to be associated with oxidative stress and protein turnover.

The protein localises to the plastid. Its subcellular location is the chloroplast. It catalyses the reaction 2 (2R)-3-phosphoglycerate + 2 H(+) = D-ribulose 1,5-bisphosphate + CO2 + H2O. The enzyme catalyses D-ribulose 1,5-bisphosphate + O2 = 2-phosphoglycolate + (2R)-3-phosphoglycerate + 2 H(+). Its function is as follows. RuBisCO catalyzes two reactions: the carboxylation of D-ribulose 1,5-bisphosphate, the primary event in carbon dioxide fixation, as well as the oxidative fragmentation of the pentose substrate in the photorespiration process. Both reactions occur simultaneously and in competition at the same active site. This chain is Ribulose bisphosphate carboxylase large chain, found in Pelargonium hortorum (Common geranium).